Here is a 569-residue protein sequence, read N- to C-terminus: Urease subunit beta (569 aa).

The Urease domain maps to Gly131–Phe569. Positions 136, 138, and 219 each coordinate Ni(2+). An N6-carboxylysine modification is found at Lys219. His221 provides a ligand contact to substrate. Ni(2+) contacts are provided by His248 and His274. The Proton donor role is filled by His322. Asp362 is a binding site for Ni(2+).

Belongs to the metallo-dependent hydrolases superfamily. Urease alpha subunit family. As to quaternary structure, heterohexamer of 3 UreA (alpha) and 3 UreB (beta) subunits. It depends on Ni cation as a cofactor. Post-translationally, carboxylation allows a single lysine to coordinate two nickel ions.

It is found in the cytoplasm. It carries out the reaction urea + 2 H2O + H(+) = hydrogencarbonate + 2 NH4(+). It participates in nitrogen metabolism; urea degradation; CO(2) and NH(3) from urea (urease route): step 1/1. This chain is Urease subunit beta, found in Helicobacter hepaticus (strain ATCC 51449 / 3B1).